A 358-amino-acid chain; its full sequence is Peptide chain release factor 1 (358 aa).

Q233 is subject to N5-methylglutamine. Residues 286 to 309 (AELASARKSQVGTGDRSERIRTYN) are disordered.

The protein belongs to the prokaryotic/mitochondrial release factor family. Post-translationally, methylated by PrmC. Methylation increases the termination efficiency of RF1.

It is found in the cytoplasm. Functionally, peptide chain release factor 1 directs the termination of translation in response to the peptide chain termination codons UAG and UAA. The chain is Peptide chain release factor 1 from Carboxydothermus hydrogenoformans (strain ATCC BAA-161 / DSM 6008 / Z-2901).